Consider the following 82-residue polypeptide: Small ribosomal subunit protein bS16 (82 aa).

It belongs to the bacterial ribosomal protein bS16 family.

The protein is Small ribosomal subunit protein bS16 of Histophilus somni (strain 2336) (Haemophilus somnus).